Reading from the N-terminus, the 961-residue chain is Cytochrome b5-like reductase apf12 (961 aa).

FAD is bound at residue A298. Residues 429–548 (ARPQVDAFAW…IKPAPHFRIA (120 aa)) form the FAD-binding FR-type domain. Residues 453–456 (SRIQ), 499–500 (SK), and G753 each bind NADP(+). A Cytochrome b5 heme-binding domain is found at 716-793 (LNQITKLELA…LNEMVIGRLD (78 aa)). 753–755 (GGE) is an FAD binding site.

The protein belongs to the flavoprotein pyridine nucleotide cytochrome reductase family. It depends on FAD as a cofactor.

Its pathway is secondary metabolite biosynthesis. Functionally, cytochrome b5-like reductase; part of the gene cluster that mediates the biosynthesis of the cyclic tetrapeptide apicidin F (APF). The non-ribosomal peptide synthetase apf1 incorporates four different amino acids to produce apicidin F: L-phenylalanine, D-pipecolic acid (D-pip), N-methoxy-L-tryptophan and L-2-aminooctanedioic acid. L-Phenylalanine is the only proteinogenic amino acid directly used by apf1. The 3 other apf1 substrates are non-proteinogenic and have to be modified by other enzymes of the cluster. Lysine is converted to delta-1-pyrroline-5-carboxylate (P5C) which is reduced to L-pipecolic acid (L-pip) by apf3. L-pip is epimerized to D-pip, probably by apf1 activity, prior to incorporation. L-Tryptophan is N-oxidyzed by one of the cytochrome P450 monooxygenases (apf7 or apf8), and further methylated at the hydroxy group by the O-methyltransferase apf6 to yield N-methoxy-L-tryptophan. The synthesis of the fourth apf1 substrate is more complex. The fatty acid synthase apf5 is involved in the synthesis of the octanoic acid backbone of L-2-aminooctanedioic acid by fixing one acetyl-CoA unit and three malonyl-CoA units. Then one of the cytochrome P450 monooxygenases (apf7 or apf8) may oxidize this backbone to 2-oxooctanoic acid. The aminotransferase apf4 is predicted to catalyze the exchange of the keto group with an amino group. The next step would be the oxidation of 2-aminooctanoic acid by one of the cytochrome P450 monooxygenases (apf7 or apf8). The last step is the oxidation of 2-amino-8-hydroxyoctanoic acid to 2-aminooctanedioic acid is catalyzed by the FAD-dependent monooxygenase apf9. The protein is Cytochrome b5-like reductase apf12 of Gibberella fujikuroi (strain CBS 195.34 / IMI 58289 / NRRL A-6831) (Bakanae and foot rot disease fungus).